The following is a 356-amino-acid chain: UDP-N-acetylglucosamine--N-acetylmuramyl-(pentapeptide) pyrophosphoryl-undecaprenol N-acetylglucosamine transferase (356 aa).

Residues 15 to 17 (TGG), N127, R163, S191, I244, 263 to 268 (ALTVSE), and Q288 contribute to the UDP-N-acetyl-alpha-D-glucosamine site.

The protein belongs to the glycosyltransferase 28 family. MurG subfamily.

It localises to the cell inner membrane. It carries out the reaction di-trans,octa-cis-undecaprenyl diphospho-N-acetyl-alpha-D-muramoyl-L-alanyl-D-glutamyl-meso-2,6-diaminopimeloyl-D-alanyl-D-alanine + UDP-N-acetyl-alpha-D-glucosamine = di-trans,octa-cis-undecaprenyl diphospho-[N-acetyl-alpha-D-glucosaminyl-(1-&gt;4)]-N-acetyl-alpha-D-muramoyl-L-alanyl-D-glutamyl-meso-2,6-diaminopimeloyl-D-alanyl-D-alanine + UDP + H(+). Its pathway is cell wall biogenesis; peptidoglycan biosynthesis. Cell wall formation. Catalyzes the transfer of a GlcNAc subunit on undecaprenyl-pyrophosphoryl-MurNAc-pentapeptide (lipid intermediate I) to form undecaprenyl-pyrophosphoryl-MurNAc-(pentapeptide)GlcNAc (lipid intermediate II). The protein is UDP-N-acetylglucosamine--N-acetylmuramyl-(pentapeptide) pyrophosphoryl-undecaprenol N-acetylglucosamine transferase of Klebsiella pneumoniae subsp. pneumoniae (strain ATCC 700721 / MGH 78578).